A 95-amino-acid polypeptide reads, in one-letter code: MNNKLTALIFHGLLAIASCKWLNEKSIQNKIDEKIGKNFLGGMAKAVVHKLAKNEFMCMANMDPTGSCETHCQKASGEKGYCHGTKCKCGVPLSY.

The N-terminal stretch at 1–19 (MNNKLTALIFHGLLAIASC) is a signal peptide. Positions 55–95 (EFMCMANMDPTGSCETHCQKASGEKGYCHGTKCKCGVPLSY) constitute a BetaSPN-type CS-alpha/beta domain. Intrachain disulfides connect cysteine 58–cysteine 82, cysteine 68–cysteine 87, and cysteine 72–cysteine 89.

Belongs to the long chain scorpion toxin family. Class 3 subfamily. As to expression, expressed by the venom gland.

It is found in the secreted. In terms of biological role, has antimicrobial activity against yeasts and bacteria. This Opistophthalmus carinatus (African yellow leg scorpion) protein is Opiscorpine-2.